Here is a 34-residue protein sequence, read N- to C-terminus: MSDINATRLPVWIGYSPCVGDDCIALLTRGEGLC.

A propeptide spanning residues 1 to 10 is cleaved from the precursor; that stretch reads MSDINATRLP. A cross-link (cyclopeptide (Val-Pro)) is located at residues 11–17; it reads VWIGYSP. Positions 18 to 34 are excised as a propeptide; it reads CVGDDCIALLTRGEGLC.

Belongs to the MSDIN fungal toxin family. In terms of processing, processed by the macrocyclase-peptidase enzyme POPB to yield a toxic cyclic heptapeptide. POPB first removes 10 residues from the N-terminus. Conformational trapping of the remaining peptide forces the enzyme to release this intermediate rather than proceed to macrocyclization. The enzyme rebinds the remaining peptide in a different conformation and catalyzes macrocyclization of the N-terminal 7 residues. As to expression, expressed in basidiocarps.

Its function is as follows. Probable toxin that belongs to the MSDIN-like toxin family responsible for a large number of food poisoning cases and deaths. In Amanita exitialis (Guangzhou destroying angel), this protein is MSDIN-like toxin proprotein 4.